The primary structure comprises 92 residues: Small ribosomal subunit protein uS19 (92 aa).

The protein belongs to the universal ribosomal protein uS19 family.

Protein S19 forms a complex with S13 that binds strongly to the 16S ribosomal RNA. This chain is Small ribosomal subunit protein uS19, found in Desulfosudis oleivorans (strain DSM 6200 / JCM 39069 / Hxd3) (Desulfococcus oleovorans).